The chain runs to 679 residues: Glycine--tRNA ligase beta subunit (679 aa).

It belongs to the class-II aminoacyl-tRNA synthetase family. In terms of assembly, tetramer of two alpha and two beta subunits.

It localises to the cytoplasm. The enzyme catalyses tRNA(Gly) + glycine + ATP = glycyl-tRNA(Gly) + AMP + diphosphate. This is Glycine--tRNA ligase beta subunit from Streptococcus pyogenes serotype M49 (strain NZ131).